Here is a 1160-residue protein sequence, read N- to C-terminus: MNREDRNVLRMKERERRNQEIQQGEDAFPPSSPLFAEPYKVTSKEDKLSSRIQSMLGNYDEMKDYIGDRSIPKLVAIPKPAVPTTTDEKANPNFFEQRHGGSHQSSKWTPVGPAPSTSQSQKRSSALQSGHSSQRSGAGGSGASSSGQRHDRDSYSSSRKKGQHGSEHSKSRSSSPGKPQAVSSLSSSHSRSHGNDHHSKEHQRSKSPRDPDANWDSPSRGPFSSGQHSSQSFPPSLMSKSSSMLQKPTAYVRPMDGQESVEPKLSSEHYSSQSHGNSMTELKPSSKAHLTKLKIPSRPLDASVSGDVSCVDEILKEMTHSWPPPLTAIHTPCKTEPSKFPFPTKESQQSNFGPGEQKRYSTAKTSNGHQSKSMLKDDLKLSSSEDSDGEQDCDKTMPRSTPGSNSEPSHHNSEGADNSRDDSSSHSGSESSSGSDSESESSSSDSEANEPSQSASPEPEPPPTNKWQLDNWLNKVNPHKVSPASSVDSNIPSSQAYKKEGREQGTASNYTDPGGTKETSSATPGRDSKTIQKGSESGRGRQKSPAQSDSTTQRRTVGKKQPKKPEKSAAEEPRGGLKIESETPVDMAASMPSSRHKAATKGSRKPNIKKESKSSPRPTAEKKKYKSASKPSQKSREIIETDTSSSDSDGSESLPPSSQTPKYPESNRTPVKPSSVEEEDSFFRQRMFSPMEEKELLSPLSEPDDRYPLIVKIDLNLLTRIPGKPYKETEPPKGEKKNVPEKHSREVQKQASEKASNKGKRKHKNDDDTRASESKKPKTEDKNSSGHKPSSSRESSKQSSTKEKDLLPSPAGPILSKDSKTEHGSRKRTVSQSSSLKSSGTSSKENSGSSSKSSSSSTAKQKKTEGKGPSSSKEAKEKAPNSSSNCPPSTPTSESSKPRRTKLAFDDRNYSADHYLQEAKKLKHNADALSDRFEKAVYYLDAVVSFIECGNALEKNAQESKSPFPMYSDTVELIKYTMKLKNYLAPDATAADKRLTVLCLRCQSLLYLRLFKLKKENALKYSKTLTEHLKNSYSNSQAPSPGLGSKAVGMPSPVSPKLSPGNSGSYSSGGSSASASGSSVTIPQKIHQMAASYVQVTSNFLYATEIWDQAEQLSKEQKEFFAELDKVMGPLIFNASIMTDLARYTRQGLHWLRQDAKLIS.

The span at Met-1–Gln-19 shows a compositional bias: basic and acidic residues. Disordered regions lie at residues Met-1–Thr-42, Pro-78–His-289, Trp-322–Arg-908, and Asn-1031–Gly-1070. Polar residues predominate over residues Pro-115–Gln-128. The residue at position 120 (Ser-120) is a Phosphoserine. Low complexity predominate over residues Arg-172–His-189. Basic and acidic residues predominate over residues His-193 to Asp-212. Ser-207 is modified (phosphoserine). Low complexity predominate over residues Ser-229 to Lys-247. 2 stretches are compositionally biased toward polar residues: residues Glu-268–Thr-280 and Tyr-360–Gln-370. Ser-382, Ser-383, Ser-384, and Ser-387 each carry phosphoserine. Positions Pro-398–Glu-407 are enriched in polar residues. Residues Pro-408–Ser-424 are compositionally biased toward basic and acidic residues. A compositionally biased stretch (low complexity) spans Ser-425–Pro-457. A phosphoserine mark is found at Ser-482, Ser-485, and Ser-486. Composition is skewed to polar residues over residues Pro-483 to Ala-496, Gly-505 to Thr-523, and Ser-544 to Arg-555. Position 544 is a phosphoserine (Ser-544). The span at Lys-563–Ser-581 shows a compositional bias: basic and acidic residues. Lys-578 participates in a covalent cross-link: Glycyl lysine isopeptide (Lys-Gly) (interchain with G-Cter in SUMO2). Basic residues predominate over residues Ser-594–Asn-607. Basic and acidic residues predominate over residues Ile-608–Lys-622. A compositionally biased stretch (low complexity) spans Thr-641–Ser-657. Ser-666 is modified (phosphoserine). Thr-669 carries the post-translational modification Phosphothreonine. Residues Ser-675, Ser-689, Ser-698, and Ser-701 each carry the phosphoserine modification. Tyr-707 carries the post-translational modification Phosphotyrosine. 3 stretches are compositionally biased toward basic and acidic residues: residues Pro-725–Ser-756, Lys-764–Ser-784, and Glu-794–Leu-806. The residue at position 809 (Ser-809) is a Phosphoserine. Residue Lys-817 is modified to N6-acetyllysine. Ser-831 bears the Phosphoserine mark. Composition is skewed to low complexity over residues Ser-831–Ala-859 and Pro-880–Ser-895. Residues Ser-1040, Ser-1052, Ser-1055, and Ser-1059 each carry the phosphoserine modification. Over residues Ser-1059 to Gly-1070 the composition is skewed to low complexity.

The protein belongs to the AF4 family. In terms of assembly, component of the super elongation complex (SEC), at least composed of EAF1, EAF2, CDK9, MLLT3/AF9, AFF (AFF1 or AFF4), the P-TEFb complex and ELL (ELL, ELL2 or ELL3). Interacts with ELL2; the interaction is direct and leads to stabilize ELL2 and prevent ELL2 ubiquitination and degradation. Interacts with ELL3; the interaction is direct. Dephosphorylated at Ser-544 by the PNUTS-PP1 complex, promoting RNA polymerase II transcription pause-release. As to expression, highly expressed in testis by Sertoli cells, and at low levels in other tissues.

It is found in the nucleus. It localises to the chromosome. In terms of biological role, key component of the super elongation complex (SEC), a complex required to increase the catalytic rate of RNA polymerase II transcription by suppressing transient pausing by the polymerase at multiple sites along the DNA. In the SEC complex, AFF4 acts as a central scaffold that recruits other factors through direct interactions with ELL proteins (ELL, ELL2 or ELL3) and the P-TEFb complex. The protein is AF4/FMR2 family member 4 (Aff4) of Mus musculus (Mouse).